Consider the following 14507-residue polypeptide: Mucin-16 (14507 aa).

Over residues M1–L17 the composition is skewed to low complexity. Residues M1 to G138 form a disordered region. Topologically, residues M1 to P14451 are extracellular. Composition is skewed to polar residues over residues T35–G46 and P56–G138. N-linked (GlcNAc...) asparagine glycosylation occurs at N139. Disordered stretches follow at residues E160 to W180, D198 to S229, F265 to S287, L396 to V554, V655 to M674, S695 to K719, and T740 to L888. Positions T166–T178 are enriched in low complexity. The segment covering P212–S229 has biased composition (polar residues). Low complexity-rich tracts occupy residues S276–S287 and L396–L413. Composition is skewed to polar residues over residues V414–S423, G431–E441, and G460–H478. A glycan (N-linked (GlcNAc...) asparagine) is linked at N434. Low complexity-rich tracts occupy residues T485 to T497 and A508 to A525. Over residues Q526 to M543 the composition is skewed to polar residues. 4 stretches are compositionally biased toward polar residues: residues L696–P706, T740–T780, N787–S796, and S805–I821. Residue N787 is glycosylated (N-linked (GlcNAc...) asparagine). Residues P823–V846 show a composition bias toward low complexity. Polar residues-rich tracts occupy residues K847–F860 and T869–L888. Residues N930 and N957 are each glycosylated (N-linked (GlcNAc...) asparagine). 4 stretches are compositionally biased toward polar residues: residues S949–E969, G1092–Q1101, G1124–H1137, and S1301–S1317. Disordered stretches follow at residues S949–A981, V1082–Q1101, P1121–T1149, S1301–S1378, L1593–S1641, and L1704–T1757. A compositionally biased stretch (low complexity) spans T1318–T1328. Composition is skewed to polar residues over residues S1334–L1347, P1368–S1378, Q1596–T1613, G1621–N1633, and L1704–M1745. A glycan (N-linked (GlcNAc...) asparagine) is linked at N1375. An N-linked (GlcNAc...) asparagine glycan is attached at N1633. Positions S1746 to T1757 are enriched in low complexity. N1840, N1877, and N1890 each carry an N-linked (GlcNAc...) asparagine glycan. A compositionally biased stretch (polar residues) spans D1846–I1908. 4 disordered regions span residues D1846 to R1930, V2010 to A2033, W2064 to I2140, and R2153 to T2177. 2 stretches are compositionally biased toward low complexity: residues S2019–A2033 and W2064–S2085. A compositionally biased stretch (polar residues) spans H2111 to S2132. N-linked (GlcNAc...) asparagine glycans are attached at residues N2345 and N2375. 2 disordered regions span residues P2393–I2455 and S2566–A2591. Composition is skewed to low complexity over residues T2417–S2429 and S2566–S2583. An N-linked (GlcNAc...) asparagine glycan is attached at N2737. Disordered regions lie at residues T2789 to N2822, T2838 to I2885, D2901 to S3006, T3019 to K3052, T3083 to I3148, S3172 to T3235, A3251 to N3276, G3299 to T3392, T3415 to S3436, and V3462 to P3491. Over residues S2803 to L2819 the composition is skewed to polar residues. Positions S2864–S2875 are enriched in low complexity. Composition is skewed to polar residues over residues L2876–I2885 and D2901–P2918. The segment covering D2919 to K2931 has biased composition (low complexity). Polar residues predominate over residues M2942 to P2968. Residues T3019–S3035 are compositionally biased toward low complexity. Over residues S3041 to K3052 the composition is skewed to polar residues. N-linked (GlcNAc...) asparagine glycosylation is present at N3085. Low complexity predominate over residues T3107–T3116. 2 stretches are compositionally biased toward polar residues: residues P3117–E3132 and S3172–W3181. An N-linked (GlcNAc...) asparagine glycan is attached at N3178. Residues T3188–P3200 are compositionally biased toward low complexity. Composition is skewed to polar residues over residues E3201–P3214 and A3251–H3261. The segment covering P3263 to T3274 has biased composition (low complexity). Composition is skewed to polar residues over residues G3299–M3342 and V3360–T3383. Composition is skewed to low complexity over residues S3424 to S3436 and P3477 to P3491. A glycan (N-linked (GlcNAc...) asparagine) is linked at N3501. Low complexity predominate over residues I3538–P3555. Disordered stretches follow at residues I3538 to A3588, T3644 to T3672, R3794 to P3829, A3843 to A3879, L3914 to V3982, M4024 to R4056, A4094 to T4121, and F4138 to H4166. Composition is skewed to polar residues over residues Q3812 to H3824 and A3848 to S3868. The span at S3916–S3927 shows a compositional bias: low complexity. Residues P3946–V3982 show a composition bias toward polar residues. Over residues T4026–T4041 the composition is skewed to low complexity. Positions M4095–T4121 are enriched in polar residues. The segment covering S4152 to P4164 has biased composition (low complexity). 5 N-linked (GlcNAc...) asparagine glycosylation sites follow: N4220, N4498, N4606, N4613, and N4624. Disordered stretches follow at residues V4728–Q4748, H4845–S4961, and V5026–S5066. The segment covering K4856–I4876 has biased composition (polar residues). N-linked (GlcNAc...) asparagine glycosylation is present at N4861. Composition is skewed to low complexity over residues P4877–T4914 and T4924–S4939. 2 stretches are compositionally biased toward polar residues: residues D4944–S4961 and V5026–T5037. A compositionally biased stretch (low complexity) spans S5038 to P5047. Residues A5048–L5059 show a composition bias toward polar residues. 3 N-linked (GlcNAc...) asparagine glycosylation sites follow: N5096, N5131, and N5228. Disordered regions lie at residues V5128–K5149, E5221–T5249, and T5271–Q5303. Positions E5221 to S5234 are enriched in polar residues. The span at S5280–S5293 shows a compositional bias: low complexity. Residues Q5294–Q5303 are compositionally biased toward polar residues. Residue N5320 is glycosylated (N-linked (GlcNAc...) asparagine). Disordered stretches follow at residues P5328 to V5365, G5381 to H5400, N5426 to A5507, A5519 to T5538, P5624 to P5654, L5675 to E5696, and I5727 to S5747. Low complexity-rich tracts occupy residues S5333 to V5365 and G5381 to P5393. An N-linked (GlcNAc...) asparagine glycan is attached at N5394. Polar residues-rich tracts occupy residues N5426–L5441 and S5447–L5485. A glycan (N-linked (GlcNAc...) asparagine) is linked at N5470. Low complexity-rich tracts occupy residues S5495–T5504, S5520–S5532, S5633–P5654, and L5675–P5688. A glycan (N-linked (GlcNAc...) asparagine) is linked at N5689. Over residues I5727–P5737 the composition is skewed to polar residues. N5863 carries an N-linked (GlcNAc...) asparagine glycan. Disordered stretches follow at residues S5882–V5931 and S6054–L6078. The segment covering T5903–Q5916 has biased composition (polar residues). Positions S5917 to S5928 are enriched in low complexity. Over residues S6054–T6063 the composition is skewed to polar residues. N-linked (GlcNAc...) asparagine glycosylation is present at N6088. Disordered regions lie at residues P6122–I6149, N6219–V6251, S6399–T6425, T6438–T6459, I6497–P6545, and T6682–S6714. Low complexity-rich tracts occupy residues S6134–I6149, P6226–V6251, and S6399–S6410. 2 stretches are compositionally biased toward polar residues: residues I6411–T6425 and I6445–T6459. Residues T6500–P6523 show a composition bias toward low complexity. Composition is skewed to polar residues over residues L6530–P6545 and T6683–T6699. N6732 carries an N-linked (GlcNAc...) asparagine glycan. 3 disordered regions span residues S6800–K6822, T6845–H6865, and T6886–T6939. Over residues T6848–S6864 the composition is skewed to low complexity. N-linked (GlcNAc...) asparagine glycosylation is present at N6859. Positions T6886–L6905 are enriched in polar residues. Positions T6919–T6938 are enriched in low complexity. The N-linked (GlcNAc...) asparagine glycan is linked to N6961. Disordered stretches follow at residues A6981–V7004, M7028–S7107, T7143–A7208, S7279–E7302, E7320–T7345, Q7360–T7427, L7437–V7456, E7463–K7503, S7527–T7553, T7577–Q7597, A7726–S7782, L7825–S7849, H7908–T7927, and P7970–P8000. The span at M7028–G7038 shows a compositional bias: polar residues. The span at S7039 to Q7055 shows a compositional bias: low complexity. A compositionally biased stretch (polar residues) spans K7057–M7075. The span at S7086–T7105 shows a compositional bias: low complexity. Polar residues predominate over residues G7166–L7200. A compositionally biased stretch (low complexity) spans S7279 to T7298. Composition is skewed to polar residues over residues S7322 to T7345, Q7360 to V7371, and S7390 to I7402. Low complexity-rich tracts occupy residues S7403 to T7427 and A7439 to S7455. Polar residues predominate over residues F7474–T7484. Positions S7485 to S7494 are enriched in low complexity. Over residues G7733 to T7749 the composition is skewed to low complexity. Residues S7750–A7765 are compositionally biased toward basic and acidic residues. Residues P7768–S7782 show a composition bias toward polar residues. Composition is skewed to low complexity over residues E7835 to T7846, T7915 to T7927, and S7973 to P8000. Residues N8029 and N8055 are each glycosylated (N-linked (GlcNAc...) asparagine). Disordered stretches follow at residues E8042–S8078, I8111–L8134, G8312–E8331, T8342–G8389, T8411–D8472, M8604–A8624, S8674–S8741, and T8775–P8880. The segment covering P8052 to S8078 has biased composition (polar residues). Residues T8319–T8328 are compositionally biased toward low complexity. N8324 carries N-linked (GlcNAc...) asparagine glycosylation. Positions M8345–G8389 are enriched in polar residues. Over residues T8607–A8624 the composition is skewed to low complexity. N-linked (GlcNAc...) asparagine glycans are attached at residues N8618 and N8684. Composition is skewed to polar residues over residues S8674–V8740 and G8781–A8810. Residues T8850 to P8880 are compositionally biased toward low complexity. N8913 carries an N-linked (GlcNAc...) asparagine glycan. Disordered regions lie at residues E8995–K9018 and S9147–H9168. An N-linked (GlcNAc...) asparagine glycan is attached at N9202. Residues S9294 to T9307 show a composition bias toward low complexity. Positions S9294–P9460 are disordered. Polar residues-rich tracts occupy residues V9308 to L9357 and S9374 to M9412. Residues S9431–P9460 show a composition bias toward low complexity. Residue N9493 is glycosylated (N-linked (GlcNAc...) asparagine). Disordered stretches follow at residues A9611–T9635, S9726–S9753, V9771–V9791, and T9869–S9890. The segment covering M9621–T9635 has biased composition (polar residues). Composition is skewed to low complexity over residues T9774–S9790 and E9881–S9890. N-linked (GlcNAc...) asparagine glycosylation occurs at N9785. N-linked (GlcNAc...) asparagine glycans are attached at residues N10075 and N10173. Disordered regions lie at residues S10175–S10218 and T10445–T10469. The segment covering T10178–T10193 has biased composition (low complexity). A compositionally biased stretch (polar residues) spans H10194–P10212. An N-linked (GlcNAc...) asparagine glycan is attached at N10510. The span at S10544–S10573 shows a compositional bias: polar residues. 2 disordered regions span residues S10544–S10590 and E10689–E10719. A glycan (N-linked (GlcNAc...) asparagine) is linked at N10700. A compositionally biased stretch (polar residues) spans A10708–E10719. Residue N10749 is glycosylated (N-linked (GlcNAc...) asparagine). Positions T10849–E10860 are enriched in polar residues. Disordered regions lie at residues T10849–T10872, L10898–V10926, and L11003–P11036. The span at S10861 to T10872 shows a compositional bias: low complexity. The span at L11003–S11018 shows a compositional bias: low complexity. Residue N11053 is glycosylated (N-linked (GlcNAc...) asparagine). Residues S11072–P11092 are disordered. N-linked (GlcNAc...) asparagine glycans are attached at residues N11224 and N11263. Polar residues-rich tracts occupy residues H11269–F11284 and S11358–T11381. 6 disordered regions span residues H11269–A11301, S11358–V11400, K11508–T11537, E11583–R11724, S11836–M11861, and Q11913–T11937. N11367 carries N-linked (GlcNAc...) asparagine glycosylation. Polar residues-rich tracts occupy residues E11583–N11594, V11631–P11651, and T11658–F11672. N-linked (GlcNAc...) asparagine glycosylation is present at N11594. A compositionally biased stretch (low complexity) spans P11700 to P11717. Composition is skewed to polar residues over residues P11849–M11861 and Q11913–S11928. Tandem repeats lie at residues A12067–T12223, T12224–M12381, A12382–A12537, T12538–T12692, T12693–T12848, S12849–T13004, T13005–T13160, T13161–T13316, A13317–M13472, T13473–S13628, A13629–S13784, and A13785–A13939. Positions A12067–A13939 are 12 X approximate tandem repeats. The SEA 1 domain maps to F12072–H12193. 3 N-linked (GlcNAc...) asparagine glycosylation sites follow: N12079, N12100, and N12116. A disulfide bond links C12126 and C12146. A glycan (N-linked (GlcNAc...) asparagine) is linked at N12168. Residues S12196–G12226 form a disordered region. In terms of domain architecture, SEA 2 spans L12228–H12349. N-linked (GlcNAc...) asparagine glycans are attached at residues N12235 and N12272. A disulfide bond links C12282 and C12302. The interval V12353–S12376 is disordered. 3 SEA domains span residues L12386–H12507, L12542–H12663, and L12697–H12818. 3 N-linked (GlcNAc...) asparagine glycosylation sites follow: N12393, N12414, and N12430. A disulfide bridge connects residues C12440 and C12460. N-linked (GlcNAc...) asparagine glycosylation is found at N12549, N12570, and N12586. C12596 and C12616 form a disulfide bridge. N-linked (GlcNAc...) asparagine glycans are attached at residues N12704, N12725, and N12741. C12751 and C12771 are oxidised to a cystine. A compositionally biased stretch (polar residues) spans Q12819–D12834. Residues Q12819–S12849 are disordered. N12824 carries N-linked (GlcNAc...) asparagine glycosylation. The span at L12835 to S12849 shows a compositional bias: low complexity. The 122-residue stretch at L12853–H12974 folds into the SEA 6 domain. N-linked (GlcNAc...) asparagine glycans are attached at residues N12860, N12881, and N12897. An intrachain disulfide couples C12907 to C12927. A compositionally biased stretch (polar residues) spans V12978–D12990. The tract at residues V12978 to P13003 is disordered. Low complexity predominate over residues L12991–P13003. SEA domains are found at residues L13009–H13130 and L13165–Q13286. N13016, N13037, and N13053 each carry an N-linked (GlcNAc...) asparagine glycan. An intrachain disulfide couples C13063 to C13083. N13172 and N13193 each carry an N-linked (GlcNAc...) asparagine glycan. A disulfide bond links C13219 and C13239. Residues P13291–P13313 show a composition bias toward polar residues. Residues P13291–A13317 form a disordered region. SEA domains follow at residues V13321 to H13442 and L13477 to Q13598. N-linked (GlcNAc...) asparagine glycans are attached at residues N13328, N13349, and N13365. An intrachain disulfide couples C13375 to C13395. N13484, N13505, and N13521 each carry an N-linked (GlcNAc...) asparagine glycan. Residues C13531 and C13551 are joined by a disulfide bond. Polar residues predominate over residues P13603 to P13621. A disordered region spans residues P13603–P13625. SEA domains are found at residues L13633–H13754, L13789–H13909, S13922–E14043, and H14073–P14193. N-linked (GlcNAc...) asparagine glycans are attached at residues N13640 and N13661. C13687 and C13707 are joined by a disulfide. N-linked (GlcNAc...) asparagine glycans are attached at residues N13733, N13744, N13796, N13816, N13832, N13929, and N13950. An intrachain disulfide couples C13976 to C13996. 2 N-linked (GlcNAc...) asparagine glycosylation sites follow: N14080 and N14100. Cysteines 14126 and 14146 form a disulfide. N-linked (GlcNAc...) asparagine glycans are attached at residues N14195, N14212, N14254, N14287, N14326, and N14363. SEA domains are found at residues I14198 to S14309 and S14319 to P14438. C14373 and C14393 form a disulfide bridge. 2 N-linked (GlcNAc...) asparagine glycosylation sites follow: N14417 and N14423. The helical transmembrane segment at F14452–C14472 threads the bilayer. Over G14473 to Q14507 the chain is Cytoplasmic.

As to quaternary structure, binds to MSLN. Binding to MSLN mediates heterotypic cell adhesion. This may contribute to the metastasis of ovarian cancer to the peritoneum by initiating cell attachment to the mesothelial epithelium via binding to MSLN. Heavily O-glycosylated; expresses both type 1 and type 2 core glycans. In terms of processing, heavily N-glycosylated; expresses primarily high mannose and complex bisecting type N-linked glycans. Post-translationally, may be phosphorylated. Phosphorylation of the intracellular C-terminal domain may induce proteolytic cleavage and the liberation of the extracellular domain into the extracellular space. May contain numerous disulfide bridges. Association of several molecules of the secreted form may occur through interchain disulfide bridges providing an extraordinarily large gel-like matrix in the extracellular space or in the lumen of secretory ducts. Expressed in corneal and conjunctival epithelia (at protein level). Overexpressed in ovarian carcinomas and ovarian low malignant potential (LMP) tumors as compared to the expression in normal ovarian tissue and ovarian adenomas.

It is found in the cell membrane. The protein resides in the secreted. It localises to the extracellular space. Its function is as follows. Thought to provide a protective, lubricating barrier against particles and infectious agents at mucosal surfaces. In Homo sapiens (Human), this protein is Mucin-16.